The sequence spans 128 residues: MSRDLNDLLTQSEETVQALIADGAETELLYEIEHHLASQDFTKLEKAAVELVKQGYHVDDADEFEDERGKRWFAFMAVTDAELDNDILNRQVREIAAIADECEVEYDGWGTLIEDEELDDEDLDDGEE.

This sequence belongs to the RraB family. In terms of assembly, interacts with the C-terminal region of Rne.

It localises to the cytoplasm. In terms of biological role, globally modulates RNA abundance by binding to RNase E (Rne) and regulating its endonucleolytic activity. Can modulate Rne action in a substrate-dependent manner by altering the composition of the degradosome. This Idiomarina loihiensis (strain ATCC BAA-735 / DSM 15497 / L2-TR) protein is Regulator of ribonuclease activity B.